Here is an 88-residue protein sequence, read N- to C-terminus: Small ribosomal subunit protein bS20 (88 aa).

Residues 1–20 form a disordered region; the sequence is MANHKSAEKRARQTIKRTER.

It belongs to the bacterial ribosomal protein bS20 family.

Functionally, binds directly to 16S ribosomal RNA. The sequence is that of Small ribosomal subunit protein bS20 from Campylobacter fetus subsp. fetus (strain 82-40).